Reading from the N-terminus, the 106-residue chain is Thiosulfate sulfurtransferase GlpE (106 aa).

Residues Gln-17–Thr-105 form the Rhodanese domain. Cys-65 functions as the Cysteine persulfide intermediate in the catalytic mechanism.

The protein belongs to the GlpE family.

The protein localises to the cytoplasm. It catalyses the reaction thiosulfate + hydrogen cyanide = thiocyanate + sulfite + 2 H(+). The catalysed reaction is thiosulfate + [thioredoxin]-dithiol = [thioredoxin]-disulfide + hydrogen sulfide + sulfite + 2 H(+). Functionally, transferase that catalyzes the transfer of sulfur from thiosulfate to thiophilic acceptors such as cyanide or dithiols. May function in a CysM-independent thiosulfate assimilation pathway by catalyzing the conversion of thiosulfate to sulfite, which can then be used for L-cysteine biosynthesis. This Tolumonas auensis (strain DSM 9187 / NBRC 110442 / TA 4) protein is Thiosulfate sulfurtransferase GlpE.